A 295-amino-acid polypeptide reads, in one-letter code: Alpha-soluble NSF attachment protein (295 aa).

Methionine 1 bears the N-acetylmethionine mark. A phosphoserine mark is found at serine 26, serine 29, and serine 195.

Belongs to the SNAP family. As to quaternary structure, interacts with PRKCABP, and disrupts the interaction between GRIA2 and PRKCABP, leading to the internalization of GRIA2. Found in a complex with VAMP8. Component of a SNARE-like complex that contains at least ZW10, USE1L, RINT1, STX18 and NAPA/SNAP-alpha. Interacts with VTI1A. Interacts with STX12. Interacts with GNA12 (via N-terminus); the interaction promotes CDH5 localization to plasma membrane.

It is found in the cell membrane. Its function is as follows. Required for vesicular transport between the endoplasmic reticulum and the Golgi apparatus. Together with GNA12 promotes CDH5 localization to plasma membrane. The sequence is that of Alpha-soluble NSF attachment protein (NAPA) from Homo sapiens (Human).